Consider the following 84-residue polypeptide: MAKSSKRRPAPEKPVKTRKCVFCAKKDQAIDYKDTALLRTYISERGKIRARRVTGNCVQHQRDIALAVKNAREVALLPFTSSVR.

This sequence belongs to the bacterial ribosomal protein bS18 family. In terms of assembly, part of the 30S ribosomal subunit. Forms a tight heterodimer with protein bS6.

Functionally, binds as a heterodimer with protein bS6 to the central domain of the 16S rRNA, where it helps stabilize the platform of the 30S subunit. The protein is Small ribosomal subunit protein bS18A (rpsR1) of Mycobacterium bovis (strain ATCC BAA-935 / AF2122/97).